We begin with the raw amino-acid sequence, 246 residues long: Ribonuclease 3 (246 aa).

The 134-residue stretch at 10 to 143 folds into the RNase III domain; the sequence is LERLEQALDY…LLGAIYLDGG (134 aa). E56 contributes to the Mg(2+) binding site. The active site involves D60. The Mg(2+) site is built by N129 and E132. Residue E132 is part of the active site. Positions 170-239 constitute a DRBM domain; it reads DYKTLLQEYL…AQQALELLIE (70 aa).

The protein belongs to the ribonuclease III family. Homodimer. Requires Mg(2+) as cofactor.

It is found in the cytoplasm. The enzyme catalyses Endonucleolytic cleavage to 5'-phosphomonoester.. Digests double-stranded RNA. Involved in the processing of primary rRNA transcript to yield the immediate precursors to the large and small rRNAs (23S and 16S). Processes some mRNAs, and tRNAs when they are encoded in the rRNA operon. Processes pre-crRNA and tracrRNA of type II CRISPR loci if present in the organism. The polypeptide is Ribonuclease 3 (Magnetococcus marinus (strain ATCC BAA-1437 / JCM 17883 / MC-1)).